The chain runs to 245 residues: MIAVTTPEILPLLHPLIGQLATAILSHWENYLDLSPFELPEGLGYVEGRLEGEKLIIENRCYQTPQFRKMHLELAKLGNGLDILHCVMFPRPEYPLPMFGCDIVSGKAGISAAIVDLSPTSGDKTLPSAYNQALAALPGADFAQARDLPPWGHIFSQYCLFIRPETAAEERQFLQRVTDFLTIHCKCARESQPLSGEEARIYLQGQRDYCSQQQKNDKTRRVLEKAFGWEWAERYMTGVLFDLPD.

It belongs to the HY2 family.

It carries out the reaction (2R,3Z)-phycocyanobilin + 4 oxidized [2Fe-2S]-[ferredoxin] = biliverdin IXalpha + 4 reduced [2Fe-2S]-[ferredoxin] + 4 H(+). In terms of biological role, catalyzes the four-electron reduction of biliverdin IX-alpha (2-electron reduction at both the A and D rings); the reaction proceeds via an isolatable 2-electron intermediate, 181,182-dihydrobiliverdin. The polypeptide is Phycocyanobilin:ferredoxin oxidoreductase (Microcystis aeruginosa (strain NIES-843 / IAM M-2473)).